A 394-amino-acid polypeptide reads, in one-letter code: Deoxyguanosinetriphosphate triphosphohydrolase-like protein (394 aa).

Residues 1 to 34 are disordered; sequence MSSSPFFVPRAPYAEDPAKSRGRRFPEDESRTRT. Residues 16–34 are compositionally biased toward basic and acidic residues; that stretch reads DPAKSRGRRFPEDESRTRT. One can recognise an HD domain in the interval 70–210; that stretch reads RLTHSLEVAQ…AALADDIAYN (141 aa).

Belongs to the dGTPase family. Type 2 subfamily.

The polypeptide is Deoxyguanosinetriphosphate triphosphohydrolase-like protein (Caulobacter sp. (strain K31)).